Consider the following 583-residue polypeptide: Leucine aminopeptidase 2, chloroplastic (583 aa).

A chloroplast-targeting transit peptide spans 1–70 (MAVTLVTSFA…ISHATLGLTQ (70 aa)). Residues K351 and D356 each coordinate Mn(2+). K363 is an active-site residue. The Mn(2+) site is built by D376, D436, and E438. R440 is a catalytic residue.

This sequence belongs to the peptidase M17 family. As to quaternary structure, homohexamer (dimer of homotrimers). Mn(2+) is required as a cofactor.

Its subcellular location is the plastid. The protein resides in the chloroplast. It carries out the reaction Release of an N-terminal amino acid, Xaa-|-Yaa-, in which Xaa is preferably Leu, but may be other amino acids including Pro although not Arg or Lys, and Yaa may be Pro. Amino acid amides and methyl esters are also readily hydrolyzed, but rates on arylamides are exceedingly low.. The catalysed reaction is Release of N-terminal proline from a peptide.. Its function is as follows. Presumably involved in the processing and regular turnover of intracellular proteins. Catalyzes the removal of unsubstituted N-terminal amino acids from various peptides. Possesses leucine aminopeptidase activity against the model substrate leucine-amido methyl coumarin. Does not seem to possess Cys-Gly dipeptidase activity. Functionally, functions as a molecular chaperone to protect proteins from heat-induced damage. The polypeptide is Leucine aminopeptidase 2, chloroplastic (Arabidopsis thaliana (Mouse-ear cress)).